The sequence spans 113 residues: UPF0342 protein MGAS2096_Spy0691 (113 aa).

Belongs to the UPF0342 family.

The polypeptide is UPF0342 protein MGAS2096_Spy0691 (Streptococcus pyogenes serotype M12 (strain MGAS2096)).